We begin with the raw amino-acid sequence, 216 residues long: Probable csgAB operon transcriptional regulatory protein (216 aa).

Residues 149–214 enclose the HTH luxR-type domain; the sequence is NSTESALLTH…QAVSWANDNL (66 aa). The H-T-H motif DNA-binding region spans 173 to 192; it reads NNEIARSLFISENTVKTHLY.

Its function is as follows. The master regulator for adhesive curli fimbriae expression; necessary for transcription of the csgAB operon. Plays a positive role in biofilm formation. The sequence is that of Probable csgAB operon transcriptional regulatory protein from Salmonella typhimurium (strain LT2 / SGSC1412 / ATCC 700720).